We begin with the raw amino-acid sequence, 224 residues long: Probable octanoyltransferase (224 aa).

The region spanning Gly-28–Pro-199 is the BPL/LPL catalytic domain. Substrate contacts are provided by residues Arg-66 to His-73, Ser-130 to Gly-132, and Gly-143 to Ala-145. Residue Cys-161 is the Acyl-thioester intermediate of the active site.

It belongs to the LipB family.

The protein localises to the cytoplasm. The catalysed reaction is octanoyl-[ACP] + L-lysyl-[protein] = N(6)-octanoyl-L-lysyl-[protein] + holo-[ACP] + H(+). It functions in the pathway protein modification; protein lipoylation via endogenous pathway; protein N(6)-(lipoyl)lysine from octanoyl-[acyl-carrier-protein]: step 1/2. Its function is as follows. Catalyzes the transfer of endogenously produced octanoic acid from octanoyl-acyl-carrier-protein onto the lipoyl domains of lipoate-dependent enzymes. Lipoyl-ACP can also act as a substrate although octanoyl-ACP is likely to be the physiological substrate. In Pyrobaculum aerophilum (strain ATCC 51768 / DSM 7523 / JCM 9630 / CIP 104966 / NBRC 100827 / IM2), this protein is Probable octanoyltransferase.